Reading from the N-terminus, the 60-residue chain is Sperm protamine P1 (60 aa).

The interval 1–60 (MARYRHSRSRSRSRYQRRRRRRSRYRSQRRRYRRRRGSRRRRRRGRRRGYRRRYSRRRRY) is disordered.

This sequence belongs to the protamine P1 family. As to expression, testis.

It is found in the nucleus. Its subcellular location is the chromosome. Functionally, protamines substitute for histones in the chromatin of sperm during the haploid phase of spermatogenesis. They compact sperm DNA into a highly condensed, stable and inactive complex. The chain is Sperm protamine P1 (PRM1) from Phascolarctos cinereus (Koala).